A 250-amino-acid polypeptide reads, in one-letter code: 3-deoxy-manno-octulosonate cytidylyltransferase (250 aa).

The protein belongs to the KdsB family.

Its subcellular location is the cytoplasm. The catalysed reaction is 3-deoxy-alpha-D-manno-oct-2-ulosonate + CTP = CMP-3-deoxy-beta-D-manno-octulosonate + diphosphate. Its pathway is nucleotide-sugar biosynthesis; CMP-3-deoxy-D-manno-octulosonate biosynthesis; CMP-3-deoxy-D-manno-octulosonate from 3-deoxy-D-manno-octulosonate and CTP: step 1/1. It functions in the pathway bacterial outer membrane biogenesis; lipopolysaccharide biosynthesis. In terms of biological role, activates KDO (a required 8-carbon sugar) for incorporation into bacterial lipopolysaccharide in Gram-negative bacteria. This is 3-deoxy-manno-octulosonate cytidylyltransferase from Herminiimonas arsenicoxydans.